A 345-amino-acid chain; its full sequence is L-threonine 3-dehydrogenase (345 aa).

Cys39 provides a ligand contact to Zn(2+). Active-site charge relay system residues include Thr41 and His44. His64, Glu65, Cys94, Cys97, Cys100, and Cys108 together coordinate Zn(2+). Residues Ile176, Asp196, Arg201, 263 to 265, and 287 to 288 contribute to the NAD(+) site; these read LGI and VY.

It belongs to the zinc-containing alcohol dehydrogenase family. Homotetramer. The cofactor is Zn(2+).

It is found in the cytoplasm. The enzyme catalyses L-threonine + NAD(+) = (2S)-2-amino-3-oxobutanoate + NADH + H(+). It participates in amino-acid degradation; L-threonine degradation via oxydo-reductase pathway; glycine from L-threonine: step 1/2. Its function is as follows. Catalyzes the NAD(+)-dependent oxidation of L-threonine to 2-amino-3-ketobutyrate. This Anaeromyxobacter dehalogenans (strain 2CP-C) protein is L-threonine 3-dehydrogenase.